Here is a 1055-residue protein sequence, read N- to C-terminus: Error-prone DNA polymerase (1055 aa).

This sequence belongs to the DNA polymerase type-C family. DnaE2 subfamily.

It is found in the cytoplasm. The catalysed reaction is DNA(n) + a 2'-deoxyribonucleoside 5'-triphosphate = DNA(n+1) + diphosphate. In terms of biological role, DNA polymerase involved in damage-induced mutagenesis and translesion synthesis (TLS). It is not the major replicative DNA polymerase. The sequence is that of Error-prone DNA polymerase from Corynebacterium glutamicum (strain ATCC 13032 / DSM 20300 / JCM 1318 / BCRC 11384 / CCUG 27702 / LMG 3730 / NBRC 12168 / NCIMB 10025 / NRRL B-2784 / 534).